We begin with the raw amino-acid sequence, 195 residues long: Elongation factor P (195 aa).

This sequence belongs to the elongation factor P family.

Its subcellular location is the cytoplasm. It participates in protein biosynthesis; polypeptide chain elongation. Involved in peptide bond synthesis. Stimulates efficient translation and peptide-bond synthesis on native or reconstituted 70S ribosomes in vitro. Probably functions indirectly by altering the affinity of the ribosome for aminoacyl-tRNA, thus increasing their reactivity as acceptors for peptidyl transferase. The polypeptide is Elongation factor P (Rhodopirellula baltica (strain DSM 10527 / NCIMB 13988 / SH1)).